The primary structure comprises 184 residues: Non-specific lipid transfer protein GPI-anchored 6 (184 aa).

Residues 1 to 24 (MEKSTRTLFITIVITSMLLGFGNS) form the signal peptide. 4 cysteine pairs are disulfide-bonded: Cys33-Cys74, Cys43-Cys58, Cys59-Cys101, and Cys72-Cys111. Residues 138-158 (NSTSPTQIHKDGTGGGKAEPV) are disordered. Ser160 carries GPI-anchor amidated serine lipidation. Positions 161 to 184 (NGWKEKSWLGVELLIYLLVSLIFF) are cleaved as a propeptide — removed in mature form.

The protein belongs to the plant LTP family. Preferentially expressed in the shoot apical meristem and the root meristem. Also present in the ovules and developing embryos. Observed in cotyledons, hypocotyls, flowers, leaves and siliques. Up-regulated in the epidermis of stems.

Its subcellular location is the cell membrane. Lipid transfer protein involved in seed and ovule maturation and development, probably by regulating the fatty acids homeostasis during suberin and sporopollenin biosynthesis or deposition. Contributes to pre-invasive defense against some non-host powdery mildew pathogens by preventing the penetration of the epidermal cell wall by the fungal agents (e.g. Blumeria graminis f. sp. hordei (Bgh)). In Arabidopsis thaliana (Mouse-ear cress), this protein is Non-specific lipid transfer protein GPI-anchored 6.